Consider the following 1006-residue polypeptide: Cytosolic carboxypeptidase 3 (1006 aa).

A Peptidase M14 domain is found at 304 to 576; the sequence is YPYTYSNLQE…HFCDSLLDYC (273 aa). Positions 368, 371, and 464 each coordinate Zn(2+). Glutamate 540 serves as the catalytic Proton donor/acceptor. Positions 790-810 are disordered; it reads ESHHQLKSKAKRCSSFQSKRT.

The protein belongs to the peptidase M14 family. The cofactor is Zn(2+). In terms of tissue distribution, widely expressed. Expressed abundantly in tissues with m otile cilia such as testis, lung and trachea. Abundantly expressed in pituitary and kidney, moderately expressed in brain, eye, fat, pancreas, stomach, and adrenal.

Its subcellular location is the cytoplasm. It localises to the cytosol. It carries out the reaction (L-glutamyl)(n+1)-gamma-L-glutamyl-L-glutamyl-[protein] + H2O = (L-glutamyl)(n)-gamma-L-glutamyl-L-glutamyl-[protein] + L-glutamate. Functionally, metallocarboxypeptidase that mediates deglutamylation of tubulin and non-tubulin target proteins. Catalyzes the removal of polyglutamate side chains present on the gamma-carboxyl group of glutamate residues within the C-terminal tail of tubulin protein. Specifically cleaves tubulin long-side-chains, while it is not able to remove the branching point glutamate. Also catalyzes the removal of polyglutamate residues from the carboxy-terminus of non-tubulin proteins such as MYLK. May catalyze the hydrolysis of aspartate from the carboxy-terminus of target proteins. Does not show detyrosinase or deglycylase activities from the carboxy-terminus of target proteins. In Mus musculus (Mouse), this protein is Cytosolic carboxypeptidase 3.